The primary structure comprises 359 residues: Holliday junction branch migration complex subunit RuvB (359 aa).

The interval 1 to 187 (MSGLEHGDAS…FGFTAHLEFY (187 aa)) is large ATPase domain (RuvB-L). Residues Leu26, Arg27, Gly68, Lys71, Thr72, Thr73, 134 to 136 (EDY), Arg177, Tyr187, and Arg224 each bind ATP. A Mg(2+)-binding site is contributed by Thr72. Residues 188–257 (ETHELEQVIE…SVRAALDLYD (70 aa)) form a small ATPAse domain (RuvB-S) region. Positions 260 to 359 (PLGLDRLDRA…VAGALFGDEL (100 aa)) are head domain (RuvB-H). Positions 315 and 320 each coordinate DNA.

This sequence belongs to the RuvB family. As to quaternary structure, homohexamer. Forms an RuvA(8)-RuvB(12)-Holliday junction (HJ) complex. HJ DNA is sandwiched between 2 RuvA tetramers; dsDNA enters through RuvA and exits via RuvB. An RuvB hexamer assembles on each DNA strand where it exits the tetramer. Each RuvB hexamer is contacted by two RuvA subunits (via domain III) on 2 adjacent RuvB subunits; this complex drives branch migration. In the full resolvosome a probable DNA-RuvA(4)-RuvB(12)-RuvC(2) complex forms which resolves the HJ.

It localises to the cytoplasm. The enzyme catalyses ATP + H2O = ADP + phosphate + H(+). Its function is as follows. The RuvA-RuvB-RuvC complex processes Holliday junction (HJ) DNA during genetic recombination and DNA repair, while the RuvA-RuvB complex plays an important role in the rescue of blocked DNA replication forks via replication fork reversal (RFR). RuvA specifically binds to HJ cruciform DNA, conferring on it an open structure. The RuvB hexamer acts as an ATP-dependent pump, pulling dsDNA into and through the RuvAB complex. RuvB forms 2 homohexamers on either side of HJ DNA bound by 1 or 2 RuvA tetramers; 4 subunits per hexamer contact DNA at a time. Coordinated motions by a converter formed by DNA-disengaged RuvB subunits stimulates ATP hydrolysis and nucleotide exchange. Immobilization of the converter enables RuvB to convert the ATP-contained energy into a lever motion, pulling 2 nucleotides of DNA out of the RuvA tetramer per ATP hydrolyzed, thus driving DNA branch migration. The RuvB motors rotate together with the DNA substrate, which together with the progressing nucleotide cycle form the mechanistic basis for DNA recombination by continuous HJ branch migration. Branch migration allows RuvC to scan DNA until it finds its consensus sequence, where it cleaves and resolves cruciform DNA. The sequence is that of Holliday junction branch migration complex subunit RuvB from Clavibacter michiganensis subsp. michiganensis (strain NCPPB 382).